A 1201-amino-acid polypeptide reads, in one-letter code: Peroxisomal ATPase PEX6 (1201 aa).

Positions 247–300 (LPSNNNNNNNNNNNNNNNNNNNNNNNNNNNNNNNNKEEEVEEEEVEVEEEEKDN) are disordered. The span at 250-280 (NNNNNNNNNNNNNNNNNNNNNNNNNNNNNNN) shows a compositional bias: low complexity. Residues 284 to 297 (EEVEEEEVEVEEEE) are compositionally biased toward acidic residues. An ATP-binding site is contributed by 959 to 966 (GPPGTGKT).

It belongs to the AAA ATPase family. Interacts with PEX1; forming the PEX1-PEX6 AAA ATPase complex, which is composed of a heterohexamer formed by a trimer of PEX1-PEX6 dimers.

The protein resides in the cytoplasm. It is found in the cytosol. Its subcellular location is the peroxisome membrane. It carries out the reaction ATP + H2O = ADP + phosphate + H(+). In terms of biological role, component of the PEX1-PEX6 AAA ATPase complex, a protein dislocase complex that mediates the ATP-dependent extraction of the PEX5 receptor from peroxisomal membranes, an essential step for PEX5 recycling. Specifically recognizes PEX5 monoubiquitinated at 'Cys-11', and pulls it out of the peroxisome lumen through the PEX2-PEX10-PEX12 retrotranslocation channel. Extraction by the PEX1-PEX6 AAA ATPase complex is accompanied by unfolding of the TPR repeats and release of bound cargo from PEX5. The chain is Peroxisomal ATPase PEX6 (pex6) from Dictyostelium discoideum (Social amoeba).